Reading from the N-terminus, the 130-residue chain is Small ribosomal subunit protein uS8 (130 aa).

This sequence belongs to the universal ribosomal protein uS8 family. As to quaternary structure, part of the 30S ribosomal subunit.

One of the primary rRNA binding proteins, it binds directly to 16S rRNA central domain where it helps coordinate assembly of the platform of the 30S subunit. This is Small ribosomal subunit protein uS8 from Pyrobaculum calidifontis (strain DSM 21063 / JCM 11548 / VA1).